The chain runs to 295 residues: Delta-1-pyrroline-5-carboxylate reductase apf3 (295 aa).

Belongs to the pyrroline-5-carboxylate reductase family.

It participates in secondary metabolite biosynthesis. Functionally, delta-1-pyrroline-5-carboxylate reductase; part of the gene cluster that mediates the biosynthesis of the cyclic tetrapeptide apicidin F (APF). The non-ribosomal peptide synthetase apf1 incorporates four different amino acids to produce apicidin F: L-phenylalanine, D-pipecolic acid (D-pip), N-methoxy-L-tryptophan and L-2-aminooctanedioic acid. L-Phenylalanine is the only proteinogenic amino acid directly used by apf1. The 3 other apf1 substrates are non-proteinogenic and have to be modified by other enzymes of the cluster. Lysine is converted to delta-1-pyrroline-5-carboxylate (P5C) which is reduced to L-pipecolic acid (L-pip) by apf3. L-pip is epimerized to D-pip, probably by apf1 activity, prior to incorporation. L-Tryptophan is N-oxidyzed by one of the cytochrome P450 monooxygenases (apf7 or apf8), and further methylated at the hydroxy group by the O-methyltransferase apf6 to yield N-methoxy-L-tryptophan. The synthesis of the fourth apf1 substrate is more complex. The fatty acid synthase apf5 is involved in the synthesis of the octanoic acid backbone of L-2-aminooctanedioic acid by fixing one acetyl-CoA unit and three malonyl-CoA units. Then one of the cytochrome P450 monooxygenases (apf7 or apf8) may oxidize this backbone to 2-oxooctanoic acid. The aminotransferase apf4 is predicted to catalyze the exchange of the keto group with an amino group. The next step would be the oxidation of 2-aminooctanoic acid by one of the cytochrome P450 monooxygenases (apf7 or apf8). The last step is the oxidation of 2-amino-8-hydroxyoctanoic acid to 2-aminooctanedioic acid is catalyzed by the FAD-dependent monooxygenase apf9. The chain is Delta-1-pyrroline-5-carboxylate reductase apf3 from Gibberella fujikuroi (strain CBS 195.34 / IMI 58289 / NRRL A-6831) (Bakanae and foot rot disease fungus).